Here is a 314-residue protein sequence, read N- to C-terminus: DNA-directed RNA polymerase subunit alpha (314 aa).

Residues 1–227 (MLEIEKPKIE…DYLKLFVALT (227 aa)) form an alpha N-terminal domain (alpha-NTD) region. Positions 244-314 (QDKILEMTIE…LGLSLRKSED (71 aa)) are alpha C-terminal domain (alpha-CTD).

The protein belongs to the RNA polymerase alpha chain family. In terms of assembly, homodimer. The RNAP catalytic core consists of 2 alpha, 1 beta, 1 beta' and 1 omega subunit. When a sigma factor is associated with the core the holoenzyme is formed, which can initiate transcription.

It carries out the reaction RNA(n) + a ribonucleoside 5'-triphosphate = RNA(n+1) + diphosphate. DNA-dependent RNA polymerase catalyzes the transcription of DNA into RNA using the four ribonucleoside triphosphates as substrates. The chain is DNA-directed RNA polymerase subunit alpha from Heliobacterium modesticaldum (strain ATCC 51547 / Ice1).